We begin with the raw amino-acid sequence, 309 residues long: D-alanine--D-alanine ligase (309 aa).

Positions 104 to 306 (KLLWQSFNLP…YQILVQKILE (203 aa)) constitute an ATP-grasp domain. Residue 137 to 192 (ISLLGLPIIVKPNQEGSSIGITIVYSYETLYKACKTAFIFDNSILIEKFIYGEEYT) coordinates ATP. Mg(2+)-binding residues include aspartate 260, glutamate 273, and asparagine 275.

This sequence belongs to the D-alanine--D-alanine ligase family. Mg(2+) is required as a cofactor. Requires Mn(2+) as cofactor.

It is found in the cytoplasm. It catalyses the reaction 2 D-alanine + ATP = D-alanyl-D-alanine + ADP + phosphate + H(+). It functions in the pathway cell wall biogenesis; peptidoglycan biosynthesis. Cell wall formation. The polypeptide is D-alanine--D-alanine ligase (Buchnera aphidicola subsp. Baizongia pistaciae (strain Bp)).